We begin with the raw amino-acid sequence, 72 residues long: Translation initiation factor IF-1 (72 aa).

Positions 1 to 72 (MAKSDVIEVD…DKGRITYRYK (72 aa)) constitute an S1-like domain.

It belongs to the IF-1 family. As to quaternary structure, component of the 30S ribosomal translation pre-initiation complex which assembles on the 30S ribosome in the order IF-2 and IF-3, IF-1 and N-formylmethionyl-tRNA(fMet); mRNA recruitment can occur at any time during PIC assembly.

It is found in the cytoplasm. Its function is as follows. One of the essential components for the initiation of protein synthesis. Stabilizes the binding of IF-2 and IF-3 on the 30S subunit to which N-formylmethionyl-tRNA(fMet) subsequently binds. Helps modulate mRNA selection, yielding the 30S pre-initiation complex (PIC). Upon addition of the 50S ribosomal subunit IF-1, IF-2 and IF-3 are released leaving the mature 70S translation initiation complex. This Sulfurimonas denitrificans (strain ATCC 33889 / DSM 1251) (Thiomicrospira denitrificans (strain ATCC 33889 / DSM 1251)) protein is Translation initiation factor IF-1.